The following is a 122-amino-acid chain: Fluoride-specific ion channel FluC (122 aa).

The next 4 membrane-spanning stretches (helical) occupy residues Met-1–Leu-21, Phe-34–Ser-54, Gly-60–Phe-80, and Phe-100–Ile-120.

The protein belongs to the fluoride channel Fluc/FEX (TC 1.A.43) family.

The protein resides in the cell inner membrane. The enzyme catalyses fluoride(in) = fluoride(out). Fluoride-specific ion channel. Important for reducing fluoride concentration in the cell, thus reducing its toxicity. The chain is Fluoride-specific ion channel FluC from Campylobacter lari (strain RM2100 / D67 / ATCC BAA-1060).